Reading from the N-terminus, the 308-residue chain is Ribosomal RNA small subunit methyltransferase H (308 aa).

S-adenosyl-L-methionine contacts are provided by residues 36-38 (GGH), Asp55, Phe86, Asp103, and Gln110.

This sequence belongs to the methyltransferase superfamily. RsmH family.

Its subcellular location is the cytoplasm. It catalyses the reaction cytidine(1402) in 16S rRNA + S-adenosyl-L-methionine = N(4)-methylcytidine(1402) in 16S rRNA + S-adenosyl-L-homocysteine + H(+). In terms of biological role, specifically methylates the N4 position of cytidine in position 1402 (C1402) of 16S rRNA. The sequence is that of Ribosomal RNA small subunit methyltransferase H from Helicobacter pylori (strain B38).